Here is a 178-residue protein sequence, read N- to C-terminus: MIVVVDCKDSFVYNLVEYISLFDKVRVVEKESAGLLRKMSFDGVVISPGPGKPDRSLEFVFKMGVPVLGVCLGHQMIAEVFGGKVGRVEPVHGKTSLVEHDGRGIFKGVRNPLRAGRYHSLAVLEPPEGFEVCAKSEDGVVMGLRRGKIHGVQFHPESVLTEDGVRMIRNFVEMCHDG.

The region spanning Met-1–Gly-178 is the Glutamine amidotransferase type-1 domain. Residue Gly-49–Gly-51 coordinates L-glutamine. Cys-71 serves as the catalytic Nucleophile; for GATase activity. L-glutamine contacts are provided by residues Gln-75 and Ser-120–Leu-121. Residues His-155 and Glu-157 each act as for GATase activity in the active site.

As to quaternary structure, heterotetramer consisting of two non-identical subunits: a beta subunit (TrpG) and a large alpha subunit (TrpE).

The catalysed reaction is chorismate + L-glutamine = anthranilate + pyruvate + L-glutamate + H(+). It participates in amino-acid biosynthesis; L-tryptophan biosynthesis; L-tryptophan from chorismate: step 1/5. Its function is as follows. Part of a heterotetrameric complex that catalyzes the two-step biosynthesis of anthranilate, an intermediate in the biosynthesis of L-tryptophan. In the first step, the glutamine-binding beta subunit (TrpG) of anthranilate synthase (AS) provides the glutamine amidotransferase activity which generates ammonia as a substrate that, along with chorismate, is used in the second step, catalyzed by the large alpha subunit of AS (TrpE) to produce anthranilate. In the absence of TrpG, TrpE can synthesize anthranilate directly from chorismate and high concentrations of ammonia. The polypeptide is Anthranilate synthase component 2 (trpG) (Archaeoglobus fulgidus (strain ATCC 49558 / DSM 4304 / JCM 9628 / NBRC 100126 / VC-16)).